Consider the following 319-residue polypeptide: L-lactate dehydrogenase 2 (319 aa).

NAD(+)-binding positions include V17, D38, K43, Y69, and G83 to A84. Substrate contacts are provided by Q86 and R92. NAD(+) contacts are provided by residues S105, A122–N124, and S147. N124 to D127 contributes to the substrate binding site. A substrate-binding site is contributed by D152–R155. 2 residues coordinate beta-D-fructose 1,6-bisphosphate: R157 and H172. H179 (proton acceptor) is an active-site residue. Residue Y224 is modified to Phosphotyrosine. T233 contacts substrate.

The protein belongs to the LDH/MDH superfamily. LDH family. As to quaternary structure, homotetramer.

It is found in the cytoplasm. The enzyme catalyses (S)-lactate + NAD(+) = pyruvate + NADH + H(+). It functions in the pathway fermentation; pyruvate fermentation to lactate; (S)-lactate from pyruvate: step 1/1. With respect to regulation, allosterically activated by fructose 1,6-bisphosphate (FBP). Catalyzes the conversion of lactate to pyruvate. The sequence is that of L-lactate dehydrogenase 2 from Peribacillus psychrosaccharolyticus (Bacillus psychrosaccharolyticus).